The following is a 1106-amino-acid chain: Carbamoyl phosphate synthase large chain (1106 aa).

Positions 1–402 are carboxyphosphate synthetic domain; the sequence is MPKREDLKSV…ALQKALRSLE (402 aa). The ATP site is built by R129, R169, G175, G176, E208, I210, E215, G241, V242, H243, Q285, and E299. The ATP-grasp 1 domain maps to 133–328; it reads KGVVERCGAE…IAKIATKLSL (196 aa). Mg(2+)-binding residues include Q285, E299, and N301. Residues Q285, E299, and N301 each coordinate Mn(2+). The interval 403-546 is oligomerization domain; the sequence is QKGSQLDFGS…YHYSSYDQED (144 aa). Residues 547–956 are carbamoyl phosphate synthetic domain; that stretch reads EIALHEKPSV…AFAKSQAAAN (410 aa). Residues 677–868 form the ATP-grasp 2 domain; sequence ARVLDIAGLI…LAKAAALIGT (192 aa). Residues R713, R752, L754, E759, G784, I785, H786, S787, Q827, and E839 each coordinate ATP. Mg(2+)-binding residues include Q827, E839, and N841. Residues Q827, E839, and N841 each contribute to the Mn(2+) site. Positions 957-1106 constitute an MGS-like domain; that stretch reads NALPTEGKVF…EALLEAAANV (150 aa). An allosteric domain region spans residues 957–1106; sequence NALPTEGKVF…EALLEAAANV (150 aa).

It belongs to the CarB family. As to quaternary structure, composed of two chains; the small (or glutamine) chain promotes the hydrolysis of glutamine to ammonia, which is used by the large (or ammonia) chain to synthesize carbamoyl phosphate. Tetramer of heterodimers (alpha,beta)4. The cofactor is Mg(2+). It depends on Mn(2+) as a cofactor.

The catalysed reaction is hydrogencarbonate + L-glutamine + 2 ATP + H2O = carbamoyl phosphate + L-glutamate + 2 ADP + phosphate + 2 H(+). The enzyme catalyses hydrogencarbonate + NH4(+) + 2 ATP = carbamoyl phosphate + 2 ADP + phosphate + 2 H(+). It functions in the pathway amino-acid biosynthesis; L-arginine biosynthesis; carbamoyl phosphate from bicarbonate: step 1/1. It participates in pyrimidine metabolism; UMP biosynthesis via de novo pathway; (S)-dihydroorotate from bicarbonate: step 1/3. In terms of biological role, large subunit of the glutamine-dependent carbamoyl phosphate synthetase (CPSase). CPSase catalyzes the formation of carbamoyl phosphate from the ammonia moiety of glutamine, carbonate, and phosphate donated by ATP, constituting the first step of 2 biosynthetic pathways, one leading to arginine and/or urea and the other to pyrimidine nucleotides. The large subunit (synthetase) binds the substrates ammonia (free or transferred from glutamine from the small subunit), hydrogencarbonate and ATP and carries out an ATP-coupled ligase reaction, activating hydrogencarbonate by forming carboxy phosphate which reacts with ammonia to form carbamoyl phosphate. This Renibacterium salmoninarum (strain ATCC 33209 / DSM 20767 / JCM 11484 / NBRC 15589 / NCIMB 2235) protein is Carbamoyl phosphate synthase large chain.